Here is an 863-residue protein sequence, read N- to C-terminus: ATP-dependent helicase Lhr-Core protein 2 (863 aa).

Positions 30, 37, 60, 61, 179, 180, 377, and 380 each coordinate ATP. Residues 41–234 (VIEIHKGENV…FVFGFNDDGT (194 aa)) form the Helicase ATP-binding domain. The short motif at 179–182 (DEVH) is the DEAH box element. The Helicase C-terminal domain maps to 275–424 (RLDELIEQHR…RIKIPQNPLD (150 aa)). The interval 418 to 512 (IPQNPLDVLV…AIYYMNTGTI (95 aa)) is WH domain. Residues 513–863 (PDEAKIEVYT…KIMAMIGELE (351 aa)) form a domain 4 region.

The protein belongs to the Lhr helicase family. Lhr-Core subfamily. In terms of assembly, monomer.

The catalysed reaction is ATP + H2O = ADP + phosphate + H(+). Unwinding of dsRNA duplexes is inhibited by AMP-PMP and ATP-gamma-S. A DNA:RNA helicase with a significant strand annealing activity, probably involved in DNA repair and RNA transactions. In vitro has a slow helicase activity with a preference for 3'-overhang duplexes; displaces RNA from 3'-overhang DNA:RNA or RNA:RNA duplexes. 3'-tailed double-stranded (ds)DNA is not unwound. The slow helicase activity on RNA duplexes is ATP-independent. Has strand annealing properties in the absence of ATP; forms 3'-overhang DNA:RNA, 3'-overhang dsRNA and 3'-overhang dsDNA duplexes but not 5'-overhang duplexes. A nucleic acid-dependent ATPase; single-stranded (ss)DNA and RNA are equally stimulatory. Binds ssDNA, RNA, dsDNA and dsRNA duplexes. The chain is ATP-dependent helicase Lhr-Core protein 2 from Thermococcus barophilus (strain DSM 11836 / MP).